We begin with the raw amino-acid sequence, 55 residues long: Large ribosomal subunit protein bL33 (55 aa).

This sequence belongs to the bacterial ribosomal protein bL33 family.

This is Large ribosomal subunit protein bL33 from Maricaulis maris (strain MCS10) (Caulobacter maris).